Reading from the N-terminus, the 85-residue chain is MMIYLSLSLGLLIFSSSNKHLLVTLLSLEFLILLLFSLLVYSNYMSMINAFIFLSVTVCEGALGFSVLVSLVRSSGSDQVQFLNE.

2 helical membrane passes run 21 to 41 (LLVT…LLVY) and 51 to 71 (FIFL…LVSL).

The protein belongs to the complex I subunit 4L family.

Its subcellular location is the mitochondrion membrane. It catalyses the reaction a ubiquinone + NADH + 5 H(+)(in) = a ubiquinol + NAD(+) + 4 H(+)(out). Core subunit of the mitochondrial membrane respiratory chain NADH dehydrogenase (Complex I) that is believed to belong to the minimal assembly required for catalysis. Complex I functions in the transfer of electrons from NADH to the respiratory chain. The immediate electron acceptor for the enzyme is believed to be ubiquinone. This is NADH-ubiquinone oxidoreductase chain 4L (ND4L) from Artemia franciscana (Brine shrimp).